The chain runs to 224 residues: Deoxyribose-phosphate aldolase (224 aa).

Asp92 acts as the Proton donor/acceptor in catalysis. Residue Lys155 is the Schiff-base intermediate with acetaldehyde of the active site. Lys184 (proton donor/acceptor) is an active-site residue.

It belongs to the DeoC/FbaB aldolase family. DeoC type 1 subfamily.

Its subcellular location is the cytoplasm. It catalyses the reaction 2-deoxy-D-ribose 5-phosphate = D-glyceraldehyde 3-phosphate + acetaldehyde. Its pathway is carbohydrate degradation; 2-deoxy-D-ribose 1-phosphate degradation; D-glyceraldehyde 3-phosphate and acetaldehyde from 2-deoxy-alpha-D-ribose 1-phosphate: step 2/2. Functionally, catalyzes a reversible aldol reaction between acetaldehyde and D-glyceraldehyde 3-phosphate to generate 2-deoxy-D-ribose 5-phosphate. This chain is Deoxyribose-phosphate aldolase, found in Shouchella clausii (strain KSM-K16) (Alkalihalobacillus clausii).